A 446-amino-acid chain; its full sequence is MTKDKKHYICSNCGNTSPKWSGQCFDCGVWGSIVEEIVSTNKAIVKTGSKQDFDKLSGHVAEQLRIPTPIGELNRVLGGGLVLGSAILIGGDPGIGKSTLLLQLAASNFASKMNCLYITGEESLDQIKLRAIRLNLTNYNTDILAATNLEDIIASIEANKNNIDLVVIDSIQTITTKELSSPPGTVSQIRICANELVNYAKQNNIIILLSCHVTKDGQLAGPKILEHLVDTVLYFEGDHNNHFRILRSYKNRFGGVGEIGVFEMCGSGLIEVTNPSELFLMKREQNVIGTSIFAGIEGSRPLLMEVQALIVPSNMVTPRRSAVGWDANRLSMILAVLSSRIGLNLANYEVYLSIAGGLKIADPASDLAVAASLISAATGKPVPEHSVFFGEISLSGEIRKTAKAETRIKEAVKLGFNKIICSKLENLTYDFISSVSHLKDLKEIIR.

The C4-type zinc finger occupies 10 to 27; sequence CSNCGNTSPKWSGQCFDC. 91–98 provides a ligand contact to ATP; the sequence is GDPGIGKS. The short motif at 250–254 is the RadA KNRFG motif element; that stretch reads KNRFG. The lon-protease-like stretch occupies residues 349 to 446; sequence EVYLSIAGGL…HLKDLKEIIR (98 aa).

This sequence belongs to the RecA family. RadA subfamily.

Its function is as follows. DNA-dependent ATPase involved in processing of recombination intermediates, plays a role in repairing DNA breaks. Stimulates the branch migration of RecA-mediated strand transfer reactions, allowing the 3' invading strand to extend heteroduplex DNA faster. Binds ssDNA in the presence of ADP but not other nucleotides, has ATPase activity that is stimulated by ssDNA and various branched DNA structures, but inhibited by SSB. Does not have RecA's homology-searching function. This is DNA repair protein RadA from Rickettsia felis (strain ATCC VR-1525 / URRWXCal2) (Rickettsia azadi).